Reading from the N-terminus, the 155-residue chain is Large ribosomal subunit protein eL24 (155 aa).

The tract at residues 92–155 is disordered; sequence AKRNMKPEVR…KSAPRVGGKR (64 aa). The span at 96 to 117 shows a compositional bias: basic and acidic residues; that stretch reads MKPEVRKAQRDQAIKAAKEQKK. Over residues 124–133 the composition is skewed to low complexity; it reads KASAPAPKAK.

The protein belongs to the eukaryotic ribosomal protein eL24 family.

The chain is Large ribosomal subunit protein eL24 (RpL24) from Spodoptera frugiperda (Fall armyworm).